Here is a 236-residue protein sequence, read N- to C-terminus: Ribonuclease P protein component 3 (236 aa).

This sequence belongs to the eukaryotic/archaeal RNase P protein component 3 family. As to quaternary structure, consists of a catalytic RNA component and at least 4-5 protein subunits.

It is found in the cytoplasm. The enzyme catalyses Endonucleolytic cleavage of RNA, removing 5'-extranucleotides from tRNA precursor.. In terms of biological role, part of ribonuclease P, a protein complex that generates mature tRNA molecules by cleaving their 5'-ends. This is Ribonuclease P protein component 3 from Natronomonas pharaonis (strain ATCC 35678 / DSM 2160 / CIP 103997 / JCM 8858 / NBRC 14720 / NCIMB 2260 / Gabara) (Halobacterium pharaonis).